The chain runs to 265 residues: Metal-activated transcriptional activator protein AMT1 (265 aa).

The segment at residues 1–40 (MVVINGVKYACDSCIKSHKAAQCEHNDRPLKILKPRGRPP) is a DNA-binding region (copper-fist). Residues cysteine 11, cysteine 14, cysteine 23, and histidine 25 each contribute to the Zn(2+) site. The disordered stretch occupies residues 103-129 (RRKRTQKSNKKDNLSINSPTNNSPSPA). Low complexity predominate over residues 119–128 (NSPTNNSPSP).

Its subcellular location is the nucleus. In terms of biological role, trans-acting regulatory protein that activates transcription of the MT genes (metallothionein) in response to copper or silver ions. The polypeptide is Metal-activated transcriptional activator protein AMT1 (AMT1) (Candida glabrata (strain ATCC 2001 / BCRC 20586 / JCM 3761 / NBRC 0622 / NRRL Y-65 / CBS 138) (Yeast)).